Reading from the N-terminus, the 175-residue chain is Major oleosin NAP-II (175 aa).

Positions 1 to 47 (RRDQYPRDRDQYSMIGRDRDKYSMIGRDRDQYNMYGRDYSKSRQIAK) are polar. Repeats lie at residues 17 to 26 (RDRDKYSMIG) and 27 to 36 (RDRDQYNMYG). Residues 48–119 (AVTAVTAGGS…AAITVFSWIY (72 aa)) form a hydrophobic region. 3 helical membrane-spanning segments follow: residues 56–76 (GSLL…LTVA), 78–98 (PLLV…ALLI), and 99–119 (TGFL…SWIY). The interval 151–175 (AQYYGQQQTGGEDDRDRTRGTQHTT) is disordered.

It belongs to the oleosin family.

It is found in the lipid droplet. The protein localises to the membrane. Its function is as follows. May have a structural role to stabilize the lipid body during desiccation of the seed by preventing coalescence of the oil. Probably interacts with both lipid and phospholipid moieties of lipid bodies. May also provide recognition signals for specific lipase anchorage in lipolysis during seedling growth. The polypeptide is Major oleosin NAP-II (Brassica napus (Rape)).